The following is a 161-amino-acid chain: Putative defense protein 2 (161 aa).

The first 11 residues, leucine 1–alanine 11, serve as a signal peptide directing secretion. In terms of domain architecture, Reelin spans tyrosine 12 to histidine 161. Cysteines 21 and 98 form a disulfide. N-linked (GlcNAc...) asparagine glycosylation occurs at asparagine 91.

Belongs to the insect defense protein family.

The protein localises to the secreted. Functionally, may have antimicrobial activity. This is Putative defense protein 2 from Antheraea mylitta (Tasar silkworm).